The sequence spans 465 residues: Antithrombin-III (465 aa).

Residues 1 to 32 (MISNGIGTVTTGKRSMCLFPLLLIGLWGCVTC) form the signal peptide. Intrachain disulfides connect Cys41/Cys161 and Cys54/Cys128. Thr64 carries the post-translational modification Phosphothreonine. A Phosphoserine modification is found at Ser69. A heparin-binding site is contributed by Trp82. Asn129 carries an N-linked (GlcNAc...) asparagine glycan. Arg162 contacts heparin. An N-linked (GlcNAc...) asparagine glycan is attached at Asn168. Arg178 is a heparin binding site. 2 N-linked (GlcNAc...) asparagine glycosylation sites follow: Asn188 and Asn225. Cysteines 280 and 463 form a disulfide.

It belongs to the serpin family. In terms of assembly, forms protease inhibiting heterodimer with TMPRSS7. In terms of processing, phosphorylated by FAM20C in the extracellular medium. Plasma.

Its subcellular location is the secreted. The protein localises to the extracellular space. Its function is as follows. Most important serine protease inhibitor in plasma that regulates the blood coagulation cascade. AT-III inhibits thrombin, matriptase-3/TMPRSS7, as well as factors IXa, Xa and XIa. Its inhibitory activity is greatly enhanced in the presence of heparin. The sequence is that of Antithrombin-III (SERPINC1) from Ovis aries (Sheep).